Reading from the N-terminus, the 202-residue chain is Methylthioribulose-1-phosphate dehydratase (202 aa).

Positions 93 and 95 each coordinate Zn(2+).

This sequence belongs to the aldolase class II family. MtnB subfamily. Requires Zn(2+) as cofactor.

The enzyme catalyses 5-(methylsulfanyl)-D-ribulose 1-phosphate = 5-methylsulfanyl-2,3-dioxopentyl phosphate + H2O. It participates in amino-acid biosynthesis; L-methionine biosynthesis via salvage pathway; L-methionine from S-methyl-5-thio-alpha-D-ribose 1-phosphate: step 2/6. Functionally, catalyzes the dehydration of methylthioribulose-1-phosphate (MTRu-1-P) into 2,3-diketo-5-methylthiopentyl-1-phosphate (DK-MTP-1-P). This is Methylthioribulose-1-phosphate dehydratase from Klebsiella pneumoniae (strain 342).